A 283-amino-acid polypeptide reads, in one-letter code: Bifunctional protein FolD (283 aa).

NADP(+) is bound by residues 165 to 167, serine 190, and isoleucine 231; that span reads GRS.

Belongs to the tetrahydrofolate dehydrogenase/cyclohydrolase family. In terms of assembly, homodimer.

It carries out the reaction (6R)-5,10-methylene-5,6,7,8-tetrahydrofolate + NADP(+) = (6R)-5,10-methenyltetrahydrofolate + NADPH. The catalysed reaction is (6R)-5,10-methenyltetrahydrofolate + H2O = (6R)-10-formyltetrahydrofolate + H(+). It participates in one-carbon metabolism; tetrahydrofolate interconversion. Catalyzes the oxidation of 5,10-methylenetetrahydrofolate to 5,10-methenyltetrahydrofolate and then the hydrolysis of 5,10-methenyltetrahydrofolate to 10-formyltetrahydrofolate. This Janthinobacterium sp. (strain Marseille) (Minibacterium massiliensis) protein is Bifunctional protein FolD.